The chain runs to 512 residues: Tyrosine decarboxylase (512 aa).

Pro-100, His-205, and His-320 together coordinate L-tyrosine. Residue Lys-321 is modified to N6-(pyridoxal phosphate)lysine. An L-tyrosine-binding site is contributed by Tyr-350.

It belongs to the group II decarboxylase family. Homodimer. The cofactor is pyridoxal 5'-phosphate. Mainly expressed in roots, stems and capsule walls.

It carries out the reaction L-tyrosine + H(+) = tyramine + CO2. Functionally, tyrosine decarboxylase that converts tyrosine into tyramine, a precursor of isoquinoline alkaloids and various amides. The protein is Tyrosine decarboxylase of Papaver somniferum (Opium poppy).